We begin with the raw amino-acid sequence, 927 residues long: DNA mismatch repair protein MutS (927 aa).

The tract at residues 44–80 (DESLKRPRNRHKPTSVPSIPLDSESQEQLETADNDND) is disordered. Positions 67–79 (ESQEQLETADNDN) are enriched in acidic residues. 725 to 732 (GPNASGKS) contacts ATP.

Belongs to the DNA mismatch repair MutS family.

Its function is as follows. This protein is involved in the repair of mismatches in DNA. It is possible that it carries out the mismatch recognition step. This protein has a weak ATPase activity. The polypeptide is DNA mismatch repair protein MutS (Prochlorococcus marinus (strain MIT 9303)).